We begin with the raw amino-acid sequence, 123 residues long: Large ribosomal subunit protein bL12 (123 aa).

Belongs to the bacterial ribosomal protein bL12 family. As to quaternary structure, homodimer. Part of the ribosomal stalk of the 50S ribosomal subunit. Forms a multimeric L10(L12)X complex, where L10 forms an elongated spine to which 2 to 4 L12 dimers bind in a sequential fashion. Binds GTP-bound translation factors.

Its function is as follows. Forms part of the ribosomal stalk which helps the ribosome interact with GTP-bound translation factors. Is thus essential for accurate translation. The protein is Large ribosomal subunit protein bL12 of Wigglesworthia glossinidia brevipalpis.